Consider the following 586-residue polypeptide: Exocyst complex component EXO70A3 (586 aa).

Residues Asn-65 and Asn-106 are each glycosylated (N-linked (GlcNAc...) asparagine). Residues 119-149 (CLPSNLRPPSDDEGSDGKSHDPQSNGLGKTD) are disordered. The chain crosses the membrane as a helical span at residues 258 to 278 (FAEITTISFGMLLSFGYAIAI). 2 N-linked (GlcNAc...) asparagine glycosylation sites follow: Asn-321 and Asn-487.

It belongs to the EXO70 family. As to quaternary structure, subunit of the exocyst complex. In terms of tissue distribution, confined to the outer layer of the columella cells in the root tips of young seedlings.

It is found in the membrane. Component of the exocyst complex involved in the docking of exocytic vesicles with fusion sites on the plasma membrane during regulated or polarized secretion. Involved in PIN4 exocytosis and gravitropic responses in columella cells. By monitoring PIN4 distribution in columella cells, modulates auxin repartition and subsequently regulates the root system architecture (RSA), thus being a component of the auxin-dependent root directional growth (ARD). The chain is Exocyst complex component EXO70A3 from Arabidopsis thaliana (Mouse-ear cress).